A 215-amino-acid chain; its full sequence is MVAVRAWSVVVPAKRLPLAKTRLRPLPEGLDGPPDAHDRLVLALLADTVAAALSSPAVTGVLVVTDDPAAAAEVTRLGARTVPDEPGRGLNPALEHGARATGGRAVAALSSDLPALRPEELTAALAAAEAAPRCFVPDAQGTGTTLLTAAGTDLSPAFGTGSAQRHAAGGAVALTGAWPGLERDVDTPGDLRGALALGVGPHTAALLGGAARPTG.

Residues threonine 144, glycine 159, and serine 162 each contribute to the phosphoenolpyruvate site.

The protein belongs to the CofC family.

The enzyme catalyses phosphoenolpyruvate + GTP + H(+) = enolpyruvoyl-2-diphospho-5'-guanosine + diphosphate. Its pathway is cofactor biosynthesis; coenzyme F420 biosynthesis. Guanylyltransferase that catalyzes the activation of phosphoenolpyruvate (PEP) as enolpyruvoyl-2-diphospho-5'-guanosine, via the condensation of PEP with GTP. It is involved in the biosynthesis of coenzyme F420, a hydride carrier cofactor. The protein is Phosphoenolpyruvate guanylyltransferase of Geodermatophilus obscurus (strain ATCC 25078 / DSM 43160 / JCM 3152 / CCUG 61914 / KCC A-0152 / KCTC 9177 / NBRC 13315 / NRRL B-3577 / G-20).